The following is a 196-amino-acid chain: Probable GTP-binding protein EngB (196 aa).

One can recognise an EngB-type G domain in the interval Asp21 to Ser195. GTP contacts are provided by residues Gly29–Ser36, Gly56–Leu60, Asp75–Gly78, Thr142–Asp145, and Ile174–Asn176. Mg(2+) contacts are provided by Ser36 and Thr58.

Belongs to the TRAFAC class TrmE-Era-EngA-EngB-Septin-like GTPase superfamily. EngB GTPase family. Mg(2+) serves as cofactor.

In terms of biological role, necessary for normal cell division and for the maintenance of normal septation. This chain is Probable GTP-binding protein EngB, found in Mycoplasma capricolum subsp. capricolum (strain California kid / ATCC 27343 / NCTC 10154).